We begin with the raw amino-acid sequence, 103 residues long: Small ubiquitin-related modifier 2 (103 aa).

The Ubiquitin-like domain maps to 15 to 92 (AHINLKVKGQ…IDAMLHQTGG (78 aa)). Gly92 is covalently cross-linked (Glycyl lysine isopeptide (Gly-Lys) (interchain with K-? in acceptor proteins)).

It belongs to the ubiquitin family. SUMO subfamily. Interacts with SAE2, SCE1, SIZ1 and MMS21. Interacts with HSFA2. Covalently attached to ABI5, FLD, GTE3, HSFA2 and ICE1.

The protein resides in the nucleus. It localises to the cytoplasm. Its function is as follows. Ubiquitin-like protein which can be covalently attached to target lysines as a monomer. Does not seem to be involved in protein degradation and may function as an antagonist of ubiquitin in the degradation process. Required for the massive protein sumoylation in the nucleus induced by heat shock and controlled by SIZ1. In Arabidopsis thaliana (Mouse-ear cress), this protein is Small ubiquitin-related modifier 2.